We begin with the raw amino-acid sequence, 251 residues long: Prolactin-7B1 (251 aa).

Residues 1–29 form the signal peptide; sequence MNTSLTQLCFWALQILLMSNLLLWEDVVS. Residues N2 and N73 are each glycosylated (N-linked (GlcNAc...) asparagine). 2 cysteine pairs are disulfide-bonded: C100-C216 and C233-C241.

This sequence belongs to the somatotropin/prolactin family. Expression restricted to placenta. Abundantly expressed in trophoblast cells of the junctional zone and trophoblasts migrating into the mesometrial decidua.

The protein resides in the secreted. The protein is Prolactin-7B1 (Prl7b1) of Mus musculus (Mouse).